The following is a 432-amino-acid chain: Gamma-glutamyl phosphate reductase (432 aa).

It belongs to the gamma-glutamyl phosphate reductase family.

Its subcellular location is the cytoplasm. It catalyses the reaction L-glutamate 5-semialdehyde + phosphate + NADP(+) = L-glutamyl 5-phosphate + NADPH + H(+). Its pathway is amino-acid biosynthesis; L-proline biosynthesis; L-glutamate 5-semialdehyde from L-glutamate: step 2/2. Its function is as follows. Catalyzes the NADPH-dependent reduction of L-glutamate 5-phosphate into L-glutamate 5-semialdehyde and phosphate. The product spontaneously undergoes cyclization to form 1-pyrroline-5-carboxylate. The chain is Gamma-glutamyl phosphate reductase from Psychrobacter sp. (strain PRwf-1).